The primary structure comprises 429 residues: MSQTLQAVRGMNDVLPDEAEFWELFEDTIRSWLKGYGYRPIRMPIVEPTPLFKRAIGEVTDIVEKEMYSFVDGLNGEALTLRPEGTAGCVRAVIEHNLAARQTQRLYYIGQMFRHERPQKGRYRQFHQVGVESFGMAGPDIDAEMILMGARLWADLGLDGIELQLNSLGQPEERALHRAALITYFEENAELLDEDAKRRLHTNPLRILDTKNPAMQELCAAAPKLIDYLGAESLAHFEGVQRVLRDAGVPFTINPRLVRGLDYYNLTVFEWVTDKLGAQGTVCAGGRYDGLVEQLGGKPTPACGFAMGVERLIALIRESGGEPAAPAPDVYLVHQGEAAARQAFRVAEGLRDQGINVLQHCGGGSFKSQMKKADGSGATFAVIIGDDEAATGEAQLKSLRAEGSAQLKLKVDDLAEAIIGQLIDSDEEE.

It belongs to the class-II aminoacyl-tRNA synthetase family. In terms of assembly, homodimer.

The protein localises to the cytoplasm. It carries out the reaction tRNA(His) + L-histidine + ATP = L-histidyl-tRNA(His) + AMP + diphosphate + H(+). The protein is Histidine--tRNA ligase of Dechloromonas aromatica (strain RCB).